The following is a 104-amino-acid chain: MFAVIRTGGKQYRVVPDAVLKVEKLEAEAGSTVTFTDVLAIGGEQGVTLGKPVVEGATVTATVIAQDKLDTVIIFKKRRRQNSRRKNGHRQPVTVLRVSGINAA.

This sequence belongs to the bacterial ribosomal protein bL21 family. In terms of assembly, part of the 50S ribosomal subunit. Contacts protein L20.

In terms of biological role, this protein binds to 23S rRNA in the presence of protein L20. This chain is Large ribosomal subunit protein bL21, found in Acidiphilium cryptum (strain JF-5).